The following is a 449-amino-acid chain: MNHNSNLVLPSHQTETQTQDETDISVWRFRGSDNAAKASSVTMRVIVYKLFDECSLDVKKPLLPLAHGDPSVYPCYRTSILVENAVVDVLRSGKGNSYGPAAGILPARQAVADYVNRDLTNKVKPNDVFITVGCNQGIEVVLQSLARPNANILLPRPSYPHYEARAVYSGLEVRKFDLLPEKEWEIDLPGIEAMADENTVAMVIINPNNPCGNVYSYDHLKKVAETAKKLGIMVITDEVYCQTIFGDKPFVPMGEFSSITPVITLGGISKGWIVPGWRIGWIALNDPRGILKSTGMVQSIQQNLDITPDATTIVQAALPEILGKANKELFAKKNSMLKQNVELVCDRLKEIPCLVCNKKPESCTYLLTKLKLPLLEDIEDDMDFCMKLAKEENLVLLPGVALGLKNWIRITIGVEAQMLEDALERLNGFCKRHLKKTESSFQALSNGKI.

Residues 1 to 12 (MNHNSNLVLPSH) are compositionally biased toward polar residues. The tract at residues 1 to 20 (MNHNSNLVLPSHQTETQTQD) is disordered.

The protein belongs to the class-I pyridoxal-phosphate-dependent aminotransferase family. Pyridoxal 5'-phosphate is required as a cofactor.

The chain is Probable aminotransferase TAT1 from Arabidopsis thaliana (Mouse-ear cress).